A 310-amino-acid chain; its full sequence is Putative HTH-type transcriptional regulatory protein YN1551_1579 (310 aa).

An HTH cro/C1-type domain is found at 125 to 180 (LKHKREEMGYSIGDVAKFLGVSRKAIYDYEKGDSDVSLEVAEKLIDLFGDDIIGDV). The segment at residues 136 to 155 (IGDVAKFLGVSRKAIYDYEK) is a DNA-binding region (H-T-H motif).

The sequence is that of Putative HTH-type transcriptional regulatory protein YN1551_1579 from Saccharolobus islandicus (strain Y.N.15.51 / Yellowstone #2) (Sulfolobus islandicus).